A 224-amino-acid chain; its full sequence is Glutathione S-transferase U8 (224 aa).

The region spanning 5-85 (EHVKLLGLWG…YIEDTWKTTH (81 aa)) is the GST N-terminal domain. Glutathione is bound by residues 15 to 16 (SP), 42 to 43 (NR), 56 to 57 (KV), and 69 to 70 (ES). In terms of domain architecture, GST C-terminal spans 91–213 (DPYERAMARF…LPPKEKLVAV (123 aa)). Thr152 is modified (phosphothreonine).

The protein belongs to the GST superfamily. Tau family.

The protein resides in the cytoplasm. The protein localises to the cytosol. The enzyme catalyses RX + glutathione = an S-substituted glutathione + a halide anion + H(+). May be involved in the conjugation of reduced glutathione to a wide number of exogenous and endogenous hydrophobic electrophiles and have a detoxification role against certain herbicides. This chain is Glutathione S-transferase U8 (GSTU8), found in Arabidopsis thaliana (Mouse-ear cress).